The chain runs to 858 residues: Toll-like receptor 5 (858 aa).

A signal peptide spans 1–20 (MGDHLDLLLGVVLMAGPVFG). The Extracellular portion of the chain corresponds to 21–639 (IPSCSFDGRI…DEEEVLKSLK (619 aa)). N-linked (GlcNAc...) asparagine glycosylation is found at Asn37 and Asn46. LRR repeat units lie at residues 45 to 68 (LNTT…SFPF), 71 to 93 (QLQL…AFRN), 95 to 117 (PNLR…AFQG), 120 to 143 (HLFE…YFRN), 146 to 166 (ALTR…HPSF), 171 to 192 (SLKS…ELEP), 197 to 211 (TLSF…LYSR), 214 to 229 (VDWG…MVLE), and 234 to 235 (SG). Asn245 is a glycosylation site (N-linked (GlcNAc...) asparagine). LRR repeat units follow at residues 260–284 (LAHH…TFAG), 289–301 (SVRH…GFVF), 313–334 (DLKV…AFYG), 337–355 (NLQV…YSSN), 385–401 (KLQT…TIHF), 412–431 (GNKL…IHLS), 449–470 (HLQI…QTPS), 474–495 (SLEQ…ELCW), 503–524 (HLQV…VFSH), 527–546 (ALRG…HNDL), and 549–567 (NLEI…NPDV). Asn342 carries N-linked (GlcNAc...) asparagine glycosylation. N-linked (GlcNAc...) asparagine glycosylation occurs at Asn422. The 53-residue stretch at 579–631 (NKFICECELSTFINWLNHTNVTIAGPPADIYCVYPDSFSGVSLFSLSTEGCDE) folds into the LRRCT domain. Intrachain disulfides connect Cys583-Cys610 and Cys585-Cys629. N-linked (GlcNAc...) asparagine glycosylation is found at Asn595 and Asn598. The chain crosses the membrane as a helical span at residues 640–660 (FSLFIVCTVTLTLFLMTILTV). At 661 to 858 (TKFRGFCFIC…IPLQTVATIS (198 aa)) the chain is on the cytoplasmic side. The region spanning 691–836 (YKYDAYLCFS…WFLHKLSQQI (146 aa)) is the TIR domain. Tyr798 carries the phosphotyrosine modification. Phosphoserine; by PKD/PRKD1 is present on Ser805.

This sequence belongs to the Toll-like receptor family. As to quaternary structure, homodimer. Interacts with MYD88 (via TIR domain). Interacts with TICAM1 (via TIR domain). Interacts with UNC93B1; this interaction is essential for proper TLR5 localization to the plasma membrane. Post-translationally, phosphorylated at Ser-805 by PKD/PRKD1; phosphorylation induces the production of inflammatory cytokines. Phosphorylated at Tyr-798 upon flagellin binding; required for signaling. As to expression, highly expressed on the basolateral surface of intestinal epithelia. Expressed also in other cells such as lung epithelial cells.

It is found in the cell membrane. Functionally, pattern recognition receptor (PRR) located on the cell surface that participates in the activation of innate immunity and inflammatory response. Recognizes small molecular motifs named pathogen-associated molecular pattern (PAMPs) expressed by pathogens and microbe-associated molecular patterns (MAMPs) usually expressed by resident microbiota. Upon ligand binding such as bacterial flagellins, recruits intracellular adapter proteins MYD88 and TRIF leading to NF-kappa-B activation, cytokine secretion and induction of the inflammatory response. Plays thereby an important role in the relationship between the intestinal epithelium and enteric microbes and contributes to the gut microbiota composition throughout life. This is Toll-like receptor 5 (TLR5) from Homo sapiens (Human).